A 397-amino-acid polypeptide reads, in one-letter code: DnaJ homolog subfamily A member 1 (397 aa).

In terms of domain architecture, J spans threonine 6 to glycine 68. The residue at position 66 (lysine 66) is an N6-acetyllysine. The residue at position 83 (serine 83) is a Phosphoserine. Residues glycine 121–lysine 205 form a CR-type zinc finger. 8 residues coordinate Zn(2+): cysteine 134, cysteine 137, cysteine 150, cysteine 153, cysteine 177, cysteine 180, cysteine 193, and cysteine 196. CXXCXGXG motif repeat units lie at residues cysteine 134–glycine 141, cysteine 150–glycine 157, cysteine 177–glycine 184, and cysteine 193–lysine 200. At serine 335 the chain carries Phosphoserine. The tract at residues valine 352–serine 397 is disordered. The segment covering glutamate 353 to aspartate 365 has biased composition (acidic residues). Residue tyrosine 381 is modified to Phosphotyrosine. Cysteine 394 carries the post-translational modification Cysteine methyl ester. Cysteine 394 is lipidated: S-farnesyl cysteine. Positions glutamine 395–serine 397 are cleaved as a propeptide — removed in mature form.

As to quaternary structure, identified in a complex with HSPA1B and BAX. Interacts with RNF207.

It localises to the membrane. Its subcellular location is the cytoplasm. It is found in the microsome. The protein localises to the mitochondrion. The protein resides in the nucleus. It localises to the perinuclear region. In terms of biological role, co-chaperone for HSPA8/Hsc70. Plays a role in protein transport into mitochondria via its role as co-chaperone. Functions as co-chaperone for HSPA1B and negatively regulates the translocation of BAX from the cytosol to mitochondria in response to cellular stress, thereby protecting cells against apoptosis. Stimulates ATP hydrolysis, but not the folding of unfolded proteins mediated by HSPA1A (in vitro). Promotes apoptosis in response to cellular stress mediated by exposure to anisomycin or UV. The protein is DnaJ homolog subfamily A member 1 (DNAJA1) of Bos taurus (Bovine).